The primary structure comprises 184 residues: MAAAFVLRNLYRARPALRSPPSELPWAPRRGHRLTPADDELYQRTRISLLQRESPLAMYIDSYSSRGFVVNGNRVFGPCALLPQSVVQWNVGSYQDITEESFSLFWMLEPRIEIVVVGTGDRTERLQPHVLRAMRQRGIAVEVQDTPNACATFNFLCHEGRVTGAALIPPPGGTALTSQAQAAE.

The protein belongs to the NDUFAF3 family. Interacts with NDUFAF4, NDUFS2 and NDUFS3.

It localises to the nucleus. It is found in the mitochondrion inner membrane. Functionally, essential factor for the assembly of mitochondrial NADH:ubiquinone oxidoreductase complex (complex I). This chain is NADH dehydrogenase [ubiquinone] 1 alpha subcomplex assembly factor 3 (NDUFAF3), found in Bos taurus (Bovine).